The following is a 94-amino-acid chain: Integration host factor subunit beta (94 aa).

The protein belongs to the bacterial histone-like protein family. In terms of assembly, heterodimer of an alpha and a beta chain.

This protein is one of the two subunits of integration host factor, a specific DNA-binding protein that functions in genetic recombination as well as in transcriptional and translational control. This Escherichia coli O127:H6 (strain E2348/69 / EPEC) protein is Integration host factor subunit beta.